A 426-amino-acid chain; its full sequence is Methionine aminopeptidase 2 (426 aa).

A disordered region spans residues 1-72 (MTSATTTEAT…QEQTNPPTVG (72 aa)). Over residues 10–34 (TAKDLQEKLSLKENDVVEDDGKVEE) the composition is skewed to basic and acidic residues. Basic residues predominate over residues 47-60 (KKKKKKKKSSKKKK). Histidine 179 lines the substrate pocket. Aspartate 199, aspartate 210, and histidine 279 together coordinate a divalent metal cation. Histidine 287 contributes to the substrate binding site. 2 residues coordinate a divalent metal cation: glutamate 312 and glutamate 407.

It belongs to the peptidase M24A family. Methionine aminopeptidase eukaryotic type 2 subfamily. Co(2+) serves as cofactor. The cofactor is Zn(2+). Requires Mn(2+) as cofactor. Fe(2+) is required as a cofactor.

The protein localises to the cytoplasm. The enzyme catalyses Release of N-terminal amino acids, preferentially methionine, from peptides and arylamides.. Its function is as follows. Cotranslationally removes the N-terminal methionine from nascent proteins. The N-terminal methionine is often cleaved when the second residue in the primary sequence is small and uncharged (Met-Ala-, Cys, Gly, Pro, Ser, Thr, or Val). The polypeptide is Methionine aminopeptidase 2 (fma2) (Schizosaccharomyces pombe (strain 972 / ATCC 24843) (Fission yeast)).